The chain runs to 1026 residues: Multidrug resistance protein MdtC (1026 aa).

Helical transmembrane passes span 15–35 (ILIA…LPVA), 333–353 (EVEE…FLFL), 360–380 (LIPA…MYLC), 387–407 (LSLM…IVVL), 431–451 (VGFT…PLLL), 463–483 (FAVT…TLTP), 528–548 (LVGV…IAIP), 853–873 (LILI…LYES), 897–917 (LFNA…IGIV), 953–973 (PIMM…LSGG), and 984–1004 (ITIV…TPVV).

Belongs to the resistance-nodulation-cell division (RND) (TC 2.A.6) family. MdtC subfamily. In terms of assembly, part of a tripartite efflux system composed of MdtA, MdtB and MdtC. MdtC forms a heteromultimer with MdtB.

The protein localises to the cell inner membrane. The protein is Multidrug resistance protein MdtC of Salmonella paratyphi A (strain AKU_12601).